The following is a 103-amino-acid chain: Large ribosomal subunit protein uL24 (103 aa).

It belongs to the universal ribosomal protein uL24 family. Part of the 50S ribosomal subunit.

Its function is as follows. One of two assembly initiator proteins, it binds directly to the 5'-end of the 23S rRNA, where it nucleates assembly of the 50S subunit. In terms of biological role, one of the proteins that surrounds the polypeptide exit tunnel on the outside of the subunit. This chain is Large ribosomal subunit protein uL24, found in Ruegeria pomeroyi (strain ATCC 700808 / DSM 15171 / DSS-3) (Silicibacter pomeroyi).